The sequence spans 173 residues: MKQQLLLLEDVDGLGRSGDIVTARPGYVRNYLLPQKKAIIAGAGTLRLQAKLKEERLLRAAEDRAESEKLAELLKDLVLEFQVRVDPDNNMYGSVTISDIIAEAAKKNVILTRKNFPNAHYAIKNLGKKSVPLKLKEGVTATLFVEVSSESAYIAVLNQQSSQEQTVAAEELE.

It belongs to the bacterial ribosomal protein bL9 family.

Its function is as follows. Binds to the 23S rRNA. In Chlamydia felis (strain Fe/C-56) (Chlamydophila felis), this protein is Large ribosomal subunit protein bL9.